An 88-amino-acid polypeptide reads, in one-letter code: Small ribosomal subunit protein uS15 (88 aa).

The protein belongs to the universal ribosomal protein uS15 family. Part of the 30S ribosomal subunit. Forms a bridge to the 50S subunit in the 70S ribosome, contacting the 23S rRNA.

Functionally, one of the primary rRNA binding proteins, it binds directly to 16S rRNA where it helps nucleate assembly of the platform of the 30S subunit by binding and bridging several RNA helices of the 16S rRNA. In terms of biological role, forms an intersubunit bridge (bridge B4) with the 23S rRNA of the 50S subunit in the ribosome. The sequence is that of Small ribosomal subunit protein uS15 from Borreliella afzelii (strain PKo) (Borrelia afzelii).